The primary structure comprises 200 residues: Probable nicotinate-nucleotide adenylyltransferase (200 aa).

It belongs to the NadD family.

The enzyme catalyses nicotinate beta-D-ribonucleotide + ATP + H(+) = deamido-NAD(+) + diphosphate. Its pathway is cofactor biosynthesis; NAD(+) biosynthesis; deamido-NAD(+) from nicotinate D-ribonucleotide: step 1/1. In terms of biological role, catalyzes the reversible adenylation of nicotinate mononucleotide (NaMN) to nicotinic acid adenine dinucleotide (NaAD). The protein is Probable nicotinate-nucleotide adenylyltransferase of Clostridium acetobutylicum (strain ATCC 824 / DSM 792 / JCM 1419 / IAM 19013 / LMG 5710 / NBRC 13948 / NRRL B-527 / VKM B-1787 / 2291 / W).